The chain runs to 441 residues: Transcriptional regulatory protein ZraR (441 aa).

In terms of domain architecture, Response regulatory spans 7–121; that stretch reads DILVVDDDVS…RLQETLEKAL (115 aa). Asp-56 bears the 4-aspartylphosphate mark. The Sigma-54 factor interaction domain occupies 141 to 370; the sequence is MIGSSPAMQH…LENAIERAVV (230 aa). ATP is bound by residues Gly-172, Thr-173, Arg-329, and Arg-359. Residues 421 to 440 constitute a DNA-binding region (H-T-H motif); that stretch reads KTEAARQLGITRKTLLAKLS.

Post-translationally, phosphorylated by ZraS.

It is found in the cytoplasm. Activity of the ZraS/ZraR two-component system is repressed by the zinc-bound form of ZraP, which probably interacts with the periplasmic region of ZraS. Part of the Zra signaling pathway, an envelope stress response (ESR) system composed of the periplasmic accessory protein ZraP, the histidine kinase ZraS and the transcriptional regulator ZraR. The ZraPSR system contributes to antibiotic resistance and is important for membrane integrity in the presence of membrane-targeting biocides. ZraR is a member of the two-component regulatory system ZraS/ZraR. When activated by ZraS, acts in conjunction with sigma-54 to regulate the expression of zraP in the presence of high Zn(2+) or Pb(2+) concentrations. Also positively autoregulates the expression of the zraSR operon. The sequence is that of Transcriptional regulatory protein ZraR (zraR) from Salmonella typhi.